The sequence spans 390 residues: S-adenosylmethionine synthase 1 (390 aa).

Residue glutamate 9 coordinates Mg(2+). Residue histidine 15 coordinates ATP. Residue glutamate 43 coordinates K(+). Residues glutamate 56 and glutamine 99 each contribute to the L-methionine site. ATP is bound by residues 167-169 (DGK), 235-238 (SGRF), aspartate 246, 252-253 (RK), alanine 269, lysine 273, and lysine 277. Aspartate 246 is a binding site for L-methionine. Lysine 277 contacts L-methionine.

The protein belongs to the AdoMet synthase family. As to quaternary structure, homotetramer. Mn(2+) serves as cofactor. The cofactor is Mg(2+). It depends on Co(2+) as a cofactor. Requires K(+) as cofactor.

The protein localises to the cytoplasm. The enzyme catalyses L-methionine + ATP + H2O = S-adenosyl-L-methionine + phosphate + diphosphate. Its pathway is amino-acid biosynthesis; S-adenosyl-L-methionine biosynthesis; S-adenosyl-L-methionine from L-methionine: step 1/1. Functionally, catalyzes the formation of S-adenosylmethionine from methionine and ATP. The reaction comprises two steps that are both catalyzed by the same enzyme: formation of S-adenosylmethionine (AdoMet) and triphosphate, and subsequent hydrolysis of the triphosphate. The chain is S-adenosylmethionine synthase 1 (SAMS1) from Nicotiana tabacum (Common tobacco).